The primary structure comprises 202 residues: Riboflavin synthase (202 aa).

2 Lumazine-binding repeats span residues 1–101 (MFTG…MGGH) and 102–198 (LVFG…ARLA). Residues 4–6 (GII), 47–49 (CLT), 66–68 (EAW), 105–107 (GHV), lysine 140, 149–151 (SLT), and 163–168 (LLIRHS) contribute to the 2,4-dihydroxypteridine site.

Homotrimer.

The catalysed reaction is 2 6,7-dimethyl-8-(1-D-ribityl)lumazine + H(+) = 5-amino-6-(D-ribitylamino)uracil + riboflavin. It functions in the pathway cofactor biosynthesis; riboflavin biosynthesis; riboflavin from 2-hydroxy-3-oxobutyl phosphate and 5-amino-6-(D-ribitylamino)uracil: step 2/2. Is inhibited by riboflavin. Product inhibition may be the major mechanism by which RS regulates its enzymatic activity in vivo. Its function is as follows. Catalyzes the dismutation of two molecules of 6,7-dimethyl-8-ribityllumazine, resulting in the formation of riboflavin and 5-amino-6-(D-ribitylamino)uracil. The chain is Riboflavin synthase from Brucella abortus (strain 2308).